The primary structure comprises 446 residues: Probable tRNA modification GTPase MnmE (446 aa).

Arg-28, Glu-87, and Arg-126 together coordinate (6S)-5-formyl-5,6,7,8-tetrahydrofolate. One can recognise a TrmE-type G domain in the interval Gly-218–Thr-373. Asn-228 serves as a coordination point for K(+). GTP contacts are provided by residues Asn-228 to Thr-233, Thr-247 to Thr-253, and Asp-272 to Gly-275. Ser-232 is a binding site for Mg(2+). Residues Thr-247, Ile-249, and Thr-252 each coordinate K(+). Position 253 (Thr-253) interacts with Mg(2+). Lys-446 lines the (6S)-5-formyl-5,6,7,8-tetrahydrofolate pocket.

Belongs to the TRAFAC class TrmE-Era-EngA-EngB-Septin-like GTPase superfamily. TrmE GTPase family. Requires K(+) as cofactor.

The protein localises to the plastid. Its subcellular location is the chloroplast. In terms of biological role, exhibits a very high intrinsic GTPase hydrolysis rate. Involved in the addition of a carboxymethylaminomethyl (cmnm) group at the wobble position (U34) of certain tRNAs, forming tRNA-cmnm(5)s(2)U34. This chain is Probable tRNA modification GTPase MnmE, found in Cyanidioschyzon merolae (strain NIES-3377 / 10D) (Unicellular red alga).